A 371-amino-acid polypeptide reads, in one-letter code: Queuine tRNA-ribosyltransferase (371 aa).

Asp-90 (proton acceptor) is an active-site residue. Residues 90–94 (DSGGF), Asp-144, Gln-189, and Gly-215 each bind substrate. Residues 246–252 (GVGTPEN) are RNA binding. Asp-265 functions as the Nucleophile in the catalytic mechanism. The segment at 270-274 (TRNAR) is RNA binding; important for wobble base 34 recognition. Residues Cys-303, Cys-305, Cys-308, and His-334 each coordinate Zn(2+).

It belongs to the queuine tRNA-ribosyltransferase family. In terms of assembly, homodimer. Within each dimer, one monomer is responsible for RNA recognition and catalysis, while the other monomer binds to the replacement base PreQ1. Zn(2+) is required as a cofactor.

It catalyses the reaction 7-aminomethyl-7-carbaguanine + guanosine(34) in tRNA = 7-aminomethyl-7-carbaguanosine(34) in tRNA + guanine. The protein operates within tRNA modification; tRNA-queuosine biosynthesis. Catalyzes the base-exchange of a guanine (G) residue with the queuine precursor 7-aminomethyl-7-deazaguanine (PreQ1) at position 34 (anticodon wobble position) in tRNAs with GU(N) anticodons (tRNA-Asp, -Asn, -His and -Tyr). Catalysis occurs through a double-displacement mechanism. The nucleophile active site attacks the C1' of nucleotide 34 to detach the guanine base from the RNA, forming a covalent enzyme-RNA intermediate. The proton acceptor active site deprotonates the incoming PreQ1, allowing a nucleophilic attack on the C1' of the ribose to form the product. After dissociation, two additional enzymatic reactions on the tRNA convert PreQ1 to queuine (Q), resulting in the hypermodified nucleoside queuosine (7-(((4,5-cis-dihydroxy-2-cyclopenten-1-yl)amino)methyl)-7-deazaguanosine). The chain is Queuine tRNA-ribosyltransferase from Helicobacter pylori (strain Shi470).